The sequence spans 354 residues: Ornithine transcarbamylase, mitochondrial (354 aa).

A mitochondrion-targeting transit peptide spans 1–32 (MLFHLRTLLNNAALRNGHNFVVRNFRCGQPLQ). At Lys-70 the chain carries N6-acetyllysine; alternate. An N6-succinyllysine; alternate modification is found at Lys-70. Lys-80 bears the N6-succinyllysine mark. Lys-88 is modified (N6-acetyllysine; alternate). An N6-succinyllysine; alternate modification is found at Lys-88. A Phosphoserine modification is found at Ser-133. N6-acetyllysine; alternate occurs at positions 144, 221, 231, and 238. N6-succinyllysine; alternate occurs at positions 144, 221, 231, and 238. At Lys-243 the chain carries N6-acetyllysine. The active site involves Asp-263. N6-succinyllysine is present on residues Lys-274 and Lys-289. An N6-acetyllysine; alternate modification is found at Lys-292. Lys-292 carries the N6-succinyllysine; alternate modification. The active site involves Cys-303. Lys-307 bears the N6-acetyllysine; alternate mark. An N6-succinyllysine; alternate modification is found at Lys-307.

The protein belongs to the aspartate/ornithine carbamoyltransferase superfamily. OTCase family. Homotrimer. Post-translationally, acetylation at Lys-88 negatively regulates ornithine carbamoyltransferase activity in response to nutrient signals.

Its subcellular location is the mitochondrion matrix. The catalysed reaction is carbamoyl phosphate + L-ornithine = L-citrulline + phosphate + H(+). It functions in the pathway nitrogen metabolism; urea cycle; L-citrulline from L-ornithine and carbamoyl phosphate: step 1/1. Its activity is regulated as follows. Negatively regulated by lysine acetylation. Catalyzes the second step of the urea cycle, the condensation of carbamoyl phosphate with L-ornithine to form L-citrulline. The urea cycle ensures the detoxification of ammonia by converting it to urea for excretion. The protein is Ornithine transcarbamylase, mitochondrial of Bos taurus (Bovine).